We begin with the raw amino-acid sequence, 160 residues long: MAGNYHSFQNPIPRYQNYNFGSSSSNHQHEHDGLVVVVEDQQQEESMMVKEQDRLLPIANVGRIMKNILPANAKVSKEAKETMQECVSEFISFVTGEASDKCHKEKRKTVNGDDICWAMANLGFDDYAAQLKKYLHRYRVLEGEKPNHHGKGGPKSSPDN.

Residues Leu-56 to Gly-62 mediate DNA binding. The tract at residues Met-83–Val-94 is subunit association domain (SAD).

Belongs to the NFYB/HAP3 subunit family. As to quaternary structure, heterotrimeric transcription factor composed of three components, NF-YA, NF-YB and NF-YC. NF-YB and NF-YC must interact and dimerize for NF-YA association and DNA binding. In terms of tissue distribution, expressed in flowers and siliques.

Its subcellular location is the nucleus. Functionally, component of the NF-Y/HAP transcription factor complex. The NF-Y complex stimulates the transcription of various genes by recognizing and binding to a CCAAT motif in promoters. The sequence is that of Nuclear transcription factor Y subunit B-5 (NFYB5) from Arabidopsis thaliana (Mouse-ear cress).